The chain runs to 288 residues: GCN5-related N-acetyltransferase 6, chloroplastic (288 aa).

A chloroplast-targeting transit peptide spans Met1–Glu111. The N-acetyltransferase domain occupies Ser151 to Ser288. Acetyl-CoA-binding positions include Leu215–Val217, Arg223–Cys228, Asn254–Val256, and Tyr261. Catalysis depends on Tyr261, which acts as the Proton donor.

This sequence belongs to the acetyltransferase family. GNAT subfamily. As to quaternary structure, oligomer. Autoacetylated. In terms of tissue distribution, expressed in green tissues and in roots.

Its subcellular location is the plastid. It localises to the chloroplast. The protein localises to the cytoplasm. The protein resides in the perinuclear region. The catalysed reaction is an N-terminal L-alpha-aminoacyl-[protein] + acetyl-CoA = N-terminal N(alpha)-acetyl-L-alpha-aminoacyl-[protein] + CoA + H(+). The enzyme catalyses L-lysyl-[protein] + acetyl-CoA = N(6)-acetyl-L-lysyl-[protein] + CoA + H(+). It catalyses the reaction N-terminal L-alanyl-[protein] + acetyl-CoA = N-terminal N(alpha)-acetyl-L-alanyl-[protein] + CoA + H(+). It carries out the reaction N-terminal L-seryl-[protein] + acetyl-CoA = N-terminal N(alpha)-acetyl-L-seryl-[protein] + CoA + H(+). The catalysed reaction is N-terminal L-threonyl-[protein] + acetyl-CoA = N-terminal N(alpha)-acetyl-L-threonyl-[protein] + CoA + H(+). The enzyme catalyses N-terminal L-methionyl-[protein] + acetyl-CoA = N-terminal N(alpha)-acetyl-L-methionyl-[protein] + CoA + H(+). It catalyses the reaction N-terminal L-valyl-[protein] + acetyl-CoA = N-terminal N(alpha)-acetyl-L-valyl-[protein] + CoA + H(+). Functionally, protein acetyltransferase with dual specificity triggering both N-alpha-acetylation (NTA), with a large spectrum of modified N-termini, including methionine, alanine, serine, threonine and to a lower extent valine as substrates, and epsilon-lysine acetylation (KA). The sequence is that of GCN5-related N-acetyltransferase 6, chloroplastic from Arabidopsis thaliana (Mouse-ear cress).